A 151-amino-acid polypeptide reads, in one-letter code: D-aminoacyl-tRNA deacylase (151 aa).

Positions G142–P143 match the Gly-cisPro motif, important for rejection of L-amino acids motif.

Belongs to the DTD family. Homodimer.

The protein resides in the cytoplasm. The enzyme catalyses glycyl-tRNA(Ala) + H2O = tRNA(Ala) + glycine + H(+). It carries out the reaction a D-aminoacyl-tRNA + H2O = a tRNA + a D-alpha-amino acid + H(+). Its function is as follows. An aminoacyl-tRNA editing enzyme that deacylates mischarged D-aminoacyl-tRNAs. Also deacylates mischarged glycyl-tRNA(Ala), protecting cells against glycine mischarging by AlaRS. Acts via tRNA-based rather than protein-based catalysis; rejects L-amino acids rather than detecting D-amino acids in the active site. By recycling D-aminoacyl-tRNA to D-amino acids and free tRNA molecules, this enzyme counteracts the toxicity associated with the formation of D-aminoacyl-tRNA entities in vivo and helps enforce protein L-homochirality. This is D-aminoacyl-tRNA deacylase from Psychrobacter arcticus (strain DSM 17307 / VKM B-2377 / 273-4).